We begin with the raw amino-acid sequence, 742 residues long: Zinc finger protein 280C (742 aa).

Glycyl lysine isopeptide (Lys-Gly) (interchain with G-Cter in SUMO2) cross-links involve residues Lys-10, Lys-23, Lys-42, Lys-65, Lys-85, Lys-123, and Lys-135. Over residues 138 to 168 (FTKTSPQEDSGACSVSQSDSTQDIPSSNILQ) the composition is skewed to polar residues. Residues 138 to 243 (FTKTSPQEDS…QSAPGSSSLR (106 aa)) form a disordered region. Glycyl lysine isopeptide (Lys-Gly) (interchain with G-Cter in SUMO2) cross-links involve residues Lys-180, Lys-186, and Lys-193. The segment covering 182–191 (PSTSKVNSVN) has biased composition (polar residues). Low complexity predominate over residues 200 to 222 (SISETRPCSSSSSQTAPSGASSQ). The segment covering 223 to 243 (TVLSNVNTSSVQSAPGSSSLR) has biased composition (polar residues). C2H2-type zinc fingers lie at residues 323 to 345 (FKCF…MKHH), 360 to 383 (TTCQ…ESTH), 390 to 413 (TICK…KDTH), 420 to 443 (YICQ…RSSH), and 477 to 499 (YRCP…KLEH). Over residues 523–578 (LGSSQSRASSPPSSTIPSTSLQLSVPKSKSTTTKNNSKVSANKATTTSPQTVATTT) the composition is skewed to low complexity. The tract at residues 523-608 (LGSSQSRASS…YKQKRQRTRK (86 aa)) is disordered. Residues 579 to 592 (GKPSASKPGTGTTK) are compositionally biased toward polar residues. Lys-580 is covalently cross-linked (Glycyl lysine isopeptide (Lys-Gly) (interchain with G-Cter in SUMO2)). The segment covering 593 to 608 (SKAKPSYKQKRQRTRK) has biased composition (basic residues).

It localises to the nucleus. In terms of biological role, may function as a transcription factor. The polypeptide is Zinc finger protein 280C (Znf280c) (Mus musculus (Mouse)).